Consider the following 215-residue polypeptide: Pyrrolidone-carboxylate peptidase (215 aa).

Active-site residues include Glu-80, Cys-143, and His-167.

Belongs to the peptidase C15 family. Homotetramer.

It is found in the cytoplasm. It carries out the reaction Release of an N-terminal pyroglutamyl group from a polypeptide, the second amino acid generally not being Pro.. Its function is as follows. Removes 5-oxoproline from various penultimate amino acid residues except L-proline. This Bacillus thuringiensis subsp. konkukian (strain 97-27) protein is Pyrrolidone-carboxylate peptidase.